We begin with the raw amino-acid sequence, 190 residues long: MEISTIECVIESLIFSYGDPLPLDKICEILELDKKTARSILKNMMDSYNNSNRGIIIREINEKYQMCSKPEYFDYVSKLYQIRQKQALSQAAYEVLAIIAYNQPITRAKIEQIRGVNSDSAVTRLTERNLIKEAGKLDVPGRPRLYETTDEFLRCFGFKSIRDLPLLDIDDLNELNLQELVEEFDEEGNK.

The protein belongs to the ScpB family. Homodimer. Homodimerization may be required to stabilize the binding of ScpA to the Smc head domains. Component of a cohesin-like complex composed of ScpA, ScpB and the Smc homodimer, in which ScpA and ScpB bind to the head domain of Smc. The presence of the three proteins is required for the association of the complex with DNA.

The protein resides in the cytoplasm. Its function is as follows. Participates in chromosomal partition during cell division. May act via the formation of a condensin-like complex containing Smc and ScpA that pull DNA away from mid-cell into both cell halves. This Ruminiclostridium cellulolyticum (strain ATCC 35319 / DSM 5812 / JCM 6584 / H10) (Clostridium cellulolyticum) protein is Segregation and condensation protein B.